A 957-amino-acid polypeptide reads, in one-letter code: Isoleucine--tRNA ligase (957 aa).

A 'HIGH' region motif is present at residues 57-67; that stretch reads PYANGDIHIGH. E594 is a binding site for L-isoleucyl-5'-AMP. The 'KMSKS' region motif lies at 635–639; the sequence is KMSKS. K638 is an ATP binding site. The Zn(2+) site is built by C920, C923, C940, and C943.

This sequence belongs to the class-I aminoacyl-tRNA synthetase family. IleS type 1 subfamily. In terms of assembly, monomer. Requires Zn(2+) as cofactor.

Its subcellular location is the cytoplasm. It catalyses the reaction tRNA(Ile) + L-isoleucine + ATP = L-isoleucyl-tRNA(Ile) + AMP + diphosphate. Functionally, catalyzes the attachment of isoleucine to tRNA(Ile). As IleRS can inadvertently accommodate and process structurally similar amino acids such as valine, to avoid such errors it has two additional distinct tRNA(Ile)-dependent editing activities. One activity is designated as 'pretransfer' editing and involves the hydrolysis of activated Val-AMP. The other activity is designated 'posttransfer' editing and involves deacylation of mischarged Val-tRNA(Ile). The polypeptide is Isoleucine--tRNA ligase (Laribacter hongkongensis (strain HLHK9)).